The following is a 196-amino-acid chain: Heat shock protein beta-8 (196 aa).

Phosphoserine is present on residues S24 and S57. T63 carries the post-translational modification Phosphothreonine; by PKC; in vitro. R71 and R78 each carry asymmetric dimethylarginine. A sHSP domain is found at 74 to 185 (TATARFGVPA…TFGESSFNNE (112 aa)). Residues 176-196 (TFGESSFNNELPQDSQEVTCT) are disordered. The span at 177-196 (FGESSFNNELPQDSQEVTCT) shows a compositional bias: polar residues.

The protein belongs to the small heat shock protein (HSP20) family. In terms of assembly, monomer. Forms a ternary complex with BAG3 and HSPA1A. Component of the chaperone-assisted selective autophagy (CASA) complex consisting of BAG3, HSPA8/HSC70, HSPB8 and STUB1/CHIP. Interacts with HSPB1. Interacts with DNAJB6. Interacts with BAG3. Predominantly expressed in skeletal muscle and heart.

It is found in the cytoplasm. The protein localises to the nucleus. Functionally, involved in the chaperone-assisted selective autophagy (CASA), a crucial process for protein quality control, particularly in mechanical strained cells and tissues such as muscle. Displays temperature-dependent chaperone activity. This chain is Heat shock protein beta-8 (HSPB8), found in Homo sapiens (Human).